A 446-amino-acid polypeptide reads, in one-letter code: Glutamine synthetase (446 aa).

Residues glutamate 18–glycine 103 form the GS beta-grasp domain. Residues proline 110 to tyrosine 446 form the GS catalytic domain. 2 residues coordinate Mg(2+): glutamate 134 and glutamate 136. Glutamate 186 is a binding site for ATP. Mg(2+) contacts are provided by glutamate 191 and glutamate 198. Residues asparagine 242–glycine 243 and glycine 243 each bind L-glutamate. Residue histidine 247 participates in Mg(2+) binding. ATP is bound at residue serine 251. Arginine 300, glutamate 306, and arginine 318 together coordinate L-glutamate. ATP contacts are provided by arginine 318 and arginine 323. Position 335 (glutamate 335) interacts with Mg(2+). Arginine 337 provides a ligand contact to L-glutamate.

It belongs to the glutamine synthetase family. In terms of assembly, oligomer of 12 subunits arranged in the form of two hexagons. In its feedback-inhibited form, interacts with TnrA in order to block its DNA-binding activity. Mg(2+) is required as a cofactor.

Its subcellular location is the cytoplasm. The enzyme catalyses L-glutamate + NH4(+) + ATP = L-glutamine + ADP + phosphate + H(+). Its activity is regulated as follows. Inhibited by glutamine. Functionally, glutamine synthetase (GS) is an unusual multitasking protein that functions as an enzyme, a transcription coregulator, and a chaperone in ammonium assimilation and in the regulation of genes involved in nitrogen metabolism. It catalyzes the ATP-dependent biosynthesis of glutamine from glutamate and ammonia. Feedback-inhibited GlnA also interacts with and regulates the activity of the transcriptional regulator TnrA. During nitrogen limitation, TnrA is in its DNA-binding active state and turns on the transcription of genes required for nitrogen assimilation. Under conditions of nitrogen excess, feedback-inhibited GlnA forms a stable complex with TnrA, which inhibits its DNA-binding activity. In contrast, feedback-inhibited GlnA acts as a chaperone to stabilize the DNA-binding activity of GlnR, which represses the transcription of nitrogen assimilation genes. This Staphylococcus aureus (strain MRSA252) protein is Glutamine synthetase.